Consider the following 465-residue polypeptide: 5'-adenylylsulfate reductase 1, chloroplastic (465 aa).

The transit peptide at 1–53 (MAMSVNVSSSSSSGIINSRFGVSLEPKVSQIGSLRLLDRVHVAPVSLNLSGKR) directs the protein to the chloroplast. The tract at residues 73 to 327 (LAATMVAEIA…KAKECGLHKG (255 aa)) is reductase domain. The Thioredoxin domain maps to 344–465 (SAVADIFKSE…SLTSFLNLVR (122 aa)). Catalysis depends on nucleophile residues C385 and C388. An intrachain disulfide couples C385 to C388.

Belongs to the APS reductase family. The cofactor is [4Fe-4S] cluster. As to expression, leaves, roots and stem.

It localises to the plastid. The protein localises to the chloroplast. It catalyses the reaction glutathione disulfide + sulfite + AMP + 2 H(+) = adenosine 5'-phosphosulfate + 2 glutathione. Stimulated by sodium sulfate &gt; ammonium sulfate and is sensitive to inactivation by 5'AMP. In terms of biological role, reduces sulfate for Cys biosynthesis. Substrate preference is adenosine-5'-phosphosulfate (APS) &gt;&gt; 3'-phosphoadenosine-5'-phosphosulfate (PAPS). Uses glutathione or DTT as source of protons. This chain is 5'-adenylylsulfate reductase 1, chloroplastic (APR1), found in Arabidopsis thaliana (Mouse-ear cress).